Consider the following 590-residue polypeptide: Aspartate--tRNA ligase (590 aa).

Glutamate 172 serves as a coordination point for L-aspartate. The tract at residues 196 to 199 (QLFK) is aspartate. Arginine 218 is an L-aspartate binding site. Residues 218–220 (RDE) and glutamine 227 contribute to the ATP site. Histidine 449 is an L-aspartate binding site. Glutamate 483 serves as a coordination point for ATP. Position 490 (arginine 490) interacts with L-aspartate. 535–538 (GLDR) serves as a coordination point for ATP.

Belongs to the class-II aminoacyl-tRNA synthetase family. Type 1 subfamily. Homodimer.

The protein resides in the cytoplasm. It carries out the reaction tRNA(Asp) + L-aspartate + ATP = L-aspartyl-tRNA(Asp) + AMP + diphosphate. Functionally, catalyzes the attachment of L-aspartate to tRNA(Asp) in a two-step reaction: L-aspartate is first activated by ATP to form Asp-AMP and then transferred to the acceptor end of tRNA(Asp). The protein is Aspartate--tRNA ligase of Mannheimia succiniciproducens (strain KCTC 0769BP / MBEL55E).